The sequence spans 423 residues: Riboflavin biosynthesis protein RibBA (423 aa).

The interval 1-204 is DHBP synthase; the sequence is MTRLDSVERA…IADLIEWRRK (204 aa). D-ribulose 5-phosphate is bound by residues 28-29, Asp33, 141-145, and Glu165; these read RE and RPGHT. Mg(2+) is bound at residue Glu29. Mg(2+) is bound at residue His144. A GTP cyclohydrolase II region spans residues 205-423; that stretch reads HEKHIARVAE…AVPGEFGGAV (219 aa). 259–263 is a GTP binding site; the sequence is RVHSE. Zn(2+) is bound by residues Cys264, Cys275, and Cys277. GTP-binding positions include Gln280, 303 to 305, and Thr325; that span reads EGR. Catalysis depends on Asp337, which acts as the Proton acceptor; for GTP cyclohydrolase activity. The active-site Nucleophile; for GTP cyclohydrolase activity is Arg339. Residues Thr360 and Lys365 each coordinate GTP.

The protein in the N-terminal section; belongs to the DHBP synthase family. This sequence in the C-terminal section; belongs to the GTP cyclohydrolase II family. Requires Mg(2+) as cofactor. The cofactor is Mn(2+). Zn(2+) serves as cofactor.

It carries out the reaction D-ribulose 5-phosphate = (2S)-2-hydroxy-3-oxobutyl phosphate + formate + H(+). The catalysed reaction is GTP + 4 H2O = 2,5-diamino-6-hydroxy-4-(5-phosphoribosylamino)-pyrimidine + formate + 2 phosphate + 3 H(+). The protein operates within cofactor biosynthesis; riboflavin biosynthesis; 2-hydroxy-3-oxobutyl phosphate from D-ribulose 5-phosphate: step 1/1. It participates in cofactor biosynthesis; riboflavin biosynthesis; 5-amino-6-(D-ribitylamino)uracil from GTP: step 1/4. Functionally, catalyzes the conversion of D-ribulose 5-phosphate to formate and 3,4-dihydroxy-2-butanone 4-phosphate. Catalyzes the conversion of GTP to 2,5-diamino-6-ribosylamino-4(3H)-pyrimidinone 5'-phosphate (DARP), formate and pyrophosphate. The sequence is that of Riboflavin biosynthesis protein RibBA from Mycolicibacterium gilvum (strain PYR-GCK) (Mycobacterium gilvum (strain PYR-GCK)).